The chain runs to 695 residues: Elongation factor G (695 aa).

Positions 8-282 (EKTRNIGIMA…AVLDYLPAPT (275 aa)) constitute a tr-type G domain. GTP is bound by residues 17–24 (AHIDAGKT), 81–85 (DTPGH), and 135–138 (NKMD).

It belongs to the TRAFAC class translation factor GTPase superfamily. Classic translation factor GTPase family. EF-G/EF-2 subfamily.

The protein localises to the cytoplasm. In terms of biological role, catalyzes the GTP-dependent ribosomal translocation step during translation elongation. During this step, the ribosome changes from the pre-translocational (PRE) to the post-translocational (POST) state as the newly formed A-site-bound peptidyl-tRNA and P-site-bound deacylated tRNA move to the P and E sites, respectively. Catalyzes the coordinated movement of the two tRNA molecules, the mRNA and conformational changes in the ribosome. This chain is Elongation factor G, found in Listeria welshimeri serovar 6b (strain ATCC 35897 / DSM 20650 / CCUG 15529 / CIP 8149 / NCTC 11857 / SLCC 5334 / V8).